The following is a 258-amino-acid chain: DNA-directed RNA polymerase subunit Rpo3 (258 aa).

The protein belongs to the archaeal Rpo3/eukaryotic RPB3 RNA polymerase subunit family. Part of the RNA polymerase complex.

The protein localises to the cytoplasm. The catalysed reaction is RNA(n) + a ribonucleoside 5'-triphosphate = RNA(n+1) + diphosphate. In terms of biological role, DNA-dependent RNA polymerase (RNAP) catalyzes the transcription of DNA into RNA using the four ribonucleoside triphosphates as substrates. This chain is DNA-directed RNA polymerase subunit Rpo3, found in Pyrobaculum calidifontis (strain DSM 21063 / JCM 11548 / VA1).